The primary structure comprises 430 residues: Chaperone SurA (430 aa).

Positions 1-25 (MQIIKTTIATFTAIAFTGAASFTSA) are cleaved as a signal peptide. PpiC domains are found at residues 176–277 (SPDY…KLYE) and 286–385 (VNQT…KVEE).

It localises to the periplasm. The catalysed reaction is [protein]-peptidylproline (omega=180) = [protein]-peptidylproline (omega=0). Functionally, chaperone involved in the correct folding and assembly of outer membrane proteins. Recognizes specific patterns of aromatic residues and the orientation of their side chains, which are found more frequently in integral outer membrane proteins. May act in both early periplasmic and late outer membrane-associated steps of protein maturation. The chain is Chaperone SurA from Saccharophagus degradans (strain 2-40 / ATCC 43961 / DSM 17024).